The chain runs to 339 residues: Uroporphyrinogen decarboxylase (339 aa).

Residues 21–25, D71, Y146, S201, and H316 each bind substrate; that span reads RQAGR.

The protein belongs to the uroporphyrinogen decarboxylase family. Homodimer.

The protein resides in the cytoplasm. The catalysed reaction is uroporphyrinogen III + 4 H(+) = coproporphyrinogen III + 4 CO2. It participates in porphyrin-containing compound metabolism; protoporphyrin-IX biosynthesis; coproporphyrinogen-III from 5-aminolevulinate: step 4/4. Catalyzes the decarboxylation of four acetate groups of uroporphyrinogen-III to yield coproporphyrinogen-III. In Rickettsia canadensis (strain McKiel), this protein is Uroporphyrinogen decarboxylase.